Reading from the N-terminus, the 221-residue chain is UPF0758 protein YicR (221 aa).

In terms of domain architecture, MPN spans 99–221; the sequence is ALLSPEMTLE…YVSFAERGWI (123 aa). Residues H170, H172, and D183 each coordinate Zn(2+). The JAMM motif signature appears at 170–183; it reads HNHPSGCAEPSKAD.

The protein belongs to the UPF0758 family. YicR subfamily.

This Salmonella arizonae (strain ATCC BAA-731 / CDC346-86 / RSK2980) protein is UPF0758 protein YicR.